The following is a 155-amino-acid chain: Deoxyuridine 5'-triphosphate nucleotidohydrolase (155 aa).

Residues 74–76 (RSG), Asn-87, and 91–93 (LID) contribute to the substrate site.

This sequence belongs to the dUTPase family. Requires Mg(2+) as cofactor.

The catalysed reaction is dUTP + H2O = dUMP + diphosphate + H(+). Its pathway is pyrimidine metabolism; dUMP biosynthesis; dUMP from dCTP (dUTP route): step 2/2. This enzyme is involved in nucleotide metabolism: it produces dUMP, the immediate precursor of thymidine nucleotides and it decreases the intracellular concentration of dUTP so that uracil cannot be incorporated into DNA. The polypeptide is Deoxyuridine 5'-triphosphate nucleotidohydrolase (Xanthomonas oryzae pv. oryzae (strain MAFF 311018)).